A 174-amino-acid chain; its full sequence is Large ribosomal subunit protein uL10 (174 aa).

The protein belongs to the universal ribosomal protein uL10 family. Part of the ribosomal stalk of the 50S ribosomal subunit. The N-terminus interacts with L11 and the large rRNA to form the base of the stalk. The C-terminus forms an elongated spine to which L12 dimers bind in a sequential fashion forming a multimeric L10(L12)X complex.

In terms of biological role, forms part of the ribosomal stalk, playing a central role in the interaction of the ribosome with GTP-bound translation factors. The sequence is that of Large ribosomal subunit protein uL10 from Verminephrobacter eiseniae (strain EF01-2).